The chain runs to 299 residues: Phosphoribosylaminoimidazole-succinocarboxamide synthase (299 aa).

Belongs to the SAICAR synthetase family.

The enzyme catalyses 5-amino-1-(5-phospho-D-ribosyl)imidazole-4-carboxylate + L-aspartate + ATP = (2S)-2-[5-amino-1-(5-phospho-beta-D-ribosyl)imidazole-4-carboxamido]succinate + ADP + phosphate + 2 H(+). The protein operates within purine metabolism; IMP biosynthesis via de novo pathway; 5-amino-1-(5-phospho-D-ribosyl)imidazole-4-carboxamide from 5-amino-1-(5-phospho-D-ribosyl)imidazole-4-carboxylate: step 1/2. This Leifsonia xyli subsp. xyli (strain CTCB07) protein is Phosphoribosylaminoimidazole-succinocarboxamide synthase.